Here is a 74-residue protein sequence, read N- to C-terminus: Translation initiation factor IF-1 (74 aa).

One can recognise an S1-like domain in the interval 1–72 (MGKEDVIRME…TRGRIVYRKK (72 aa)).

Belongs to the IF-1 family. As to quaternary structure, component of the 30S ribosomal translation pre-initiation complex which assembles on the 30S ribosome in the order IF-2 and IF-3, IF-1 and N-formylmethionyl-tRNA(fMet); mRNA recruitment can occur at any time during PIC assembly.

It is found in the cytoplasm. In terms of biological role, one of the essential components for the initiation of protein synthesis. Stabilizes the binding of IF-2 and IF-3 on the 30S subunit to which N-formylmethionyl-tRNA(fMet) subsequently binds. Helps modulate mRNA selection, yielding the 30S pre-initiation complex (PIC). Upon addition of the 50S ribosomal subunit IF-1, IF-2 and IF-3 are released leaving the mature 70S translation initiation complex. The protein is Translation initiation factor IF-1 of Thermotoga maritima (strain ATCC 43589 / DSM 3109 / JCM 10099 / NBRC 100826 / MSB8).